Consider the following 160-residue polypeptide: Cyclic pyranopterin monophosphate synthase (160 aa).

Residues 77 to 79 and 114 to 115 contribute to the substrate site; these read MCH and ME. D129 is an active-site residue.

It belongs to the MoaC family. Homohexamer; trimer of dimers.

It catalyses the reaction (8S)-3',8-cyclo-7,8-dihydroguanosine 5'-triphosphate = cyclic pyranopterin phosphate + diphosphate. Its pathway is cofactor biosynthesis; molybdopterin biosynthesis. Functionally, catalyzes the conversion of (8S)-3',8-cyclo-7,8-dihydroguanosine 5'-triphosphate to cyclic pyranopterin monophosphate (cPMP). In Listeria innocua serovar 6a (strain ATCC BAA-680 / CLIP 11262), this protein is Cyclic pyranopterin monophosphate synthase.